The sequence spans 291 residues: ADP-dependent (S)-NAD(P)H-hydrate dehydratase (291 aa).

The 269-residue stretch at 5–273 (SKDILEEVIT…QALPTYMKKY (269 aa)) folds into the YjeF C-terminal domain. 3 residues coordinate (6S)-NADPHX: Ala-40, Gly-103, and His-153. AMP is bound at residue Gly-215. A (6S)-NADPHX-binding site is contributed by Asp-216.

Belongs to the NnrD/CARKD family. As to quaternary structure, homotetramer. It depends on Mg(2+) as a cofactor.

It catalyses the reaction (6S)-NADHX + ADP = AMP + phosphate + NADH + H(+). It carries out the reaction (6S)-NADPHX + ADP = AMP + phosphate + NADPH + H(+). In terms of biological role, catalyzes the dehydration of the S-form of NAD(P)HX at the expense of ADP, which is converted to AMP. Together with NAD(P)HX epimerase, which catalyzes the epimerization of the S- and R-forms, the enzyme allows the repair of both epimers of NAD(P)HX, a damaged form of NAD(P)H that is a result of enzymatic or heat-dependent hydration. The protein is ADP-dependent (S)-NAD(P)H-hydrate dehydratase of Enterococcus faecalis (strain ATCC 700802 / V583).